Reading from the N-terminus, the 570-residue chain is Sulfite reductase [NADPH] hemoprotein beta-component (570 aa).

The [4Fe-4S] cluster site is built by C434, C440, C479, and C483. Residue C483 participates in siroheme binding.

This sequence belongs to the nitrite and sulfite reductase 4Fe-4S domain family. Alpha(8)-beta(8). The alpha component is a flavoprotein, the beta component is a hemoprotein. The cofactor is siroheme. Requires [4Fe-4S] cluster as cofactor.

It catalyses the reaction hydrogen sulfide + 3 NADP(+) + 3 H2O = sulfite + 3 NADPH + 4 H(+). The protein operates within sulfur metabolism; hydrogen sulfide biosynthesis; hydrogen sulfide from sulfite (NADPH route): step 1/1. Component of the sulfite reductase complex that catalyzes the 6-electron reduction of sulfite to sulfide. This is one of several activities required for the biosynthesis of L-cysteine from sulfate. The protein is Sulfite reductase [NADPH] hemoprotein beta-component (cysI) of Escherichia coli (strain K12).